The primary structure comprises 444 residues: 3-phosphoshikimate 1-carboxyvinyltransferase (444 aa).

Lysine 29, serine 30, and arginine 34 together coordinate 3-phosphoshikimate. Lysine 29 is a phosphoenolpyruvate binding site. The phosphoenolpyruvate site is built by glycine 103 and arginine 132. 3-phosphoshikimate is bound by residues serine 177, glutamine 179, aspartate 329, and lysine 356. Glutamine 179 serves as a coordination point for phosphoenolpyruvate. Aspartate 329 acts as the Proton acceptor in catalysis. Residues arginine 360 and arginine 402 each coordinate phosphoenolpyruvate.

Belongs to the EPSP synthase family. Monomer.

The protein resides in the cytoplasm. It carries out the reaction 3-phosphoshikimate + phosphoenolpyruvate = 5-O-(1-carboxyvinyl)-3-phosphoshikimate + phosphate. It participates in metabolic intermediate biosynthesis; chorismate biosynthesis; chorismate from D-erythrose 4-phosphate and phosphoenolpyruvate: step 6/7. Catalyzes the transfer of the enolpyruvyl moiety of phosphoenolpyruvate (PEP) to the 5-hydroxyl of shikimate-3-phosphate (S3P) to produce enolpyruvyl shikimate-3-phosphate and inorganic phosphate. In Prochlorococcus marinus (strain NATL2A), this protein is 3-phosphoshikimate 1-carboxyvinyltransferase.